Here is a 1325-residue protein sequence, read N- to C-terminus: Nonribosomal peptide synthetase (1325 aa).

The tract at residues 248 to 644 is adenylation; it reads YQQLDRLSTR…LGEIEYQIQQ (397 aa). Residues 779–856 enclose the Carrier domain; that stretch reads EIVNPGEITL…DQARLLRPLS (78 aa). S816 is subject to O-(pantetheine 4'-phosphoryl)serine. The tract at residues 893-1310 is condensation; sequence EDVYPCTPLQ…DDYSTTLHTL (418 aa).

This sequence belongs to the NRP synthetase family. It depends on pantetheine 4'-phosphate as a cofactor.

Its pathway is antifungal biosynthesis. Its function is as follows. Nonribosomal peptide synthetase; part of the gene cluster that mediates the biosynthesis of the tetrahydropyranyl antifungal agent lanomycin that acts as an inhibitor of CYP51 and blocks the ergosterol biosynthesis. The biosynthesis probably begins with the formation of an hexaketide, followed by methionine mediated alkylation of C-2 and C-6, and methylation of the reduced C-3 oxygen, pyran forming reductive ring closure, oxygenation of C-4, beta-keto reduction, enoyl reduction and dehydration of the remaining oxygens, and finally, acylation with glycine to complete the biosynthesis. In Pyrenophora dematioidea (Helminthosporium dematioideum), this protein is Nonribosomal peptide synthetase.